The following is a 312-amino-acid chain: Pre-mRNA-splicing factor 38A (312 aa).

Residues 1–179 (MANRTVKDAH…VLEETEQLDP (179 aa)) are N-terminal protein interaction domain. The segment at 180-312 (RVSALEEDMD…SHKKSRRGNE (133 aa)) is disordered. Positions 184 to 201 (LEEDMDDVESSEEEEDDD) are enriched in acidic residues. Positions 202-223 (EKGRDPSPEHHRRNYRDLDRPR) are enriched in basic and acidic residues. Basic residues-rich tracts occupy residues 224-294 (RSPS…RSHS) and 301-312 (KKSHKKSRRGNE).

It belongs to the PRP38 family. As to quaternary structure, component of the spliceosome B complex.

The protein localises to the nucleus. Functionally, involved in pre-mRNA splicing as a component of the spliceosome. This chain is Pre-mRNA-splicing factor 38A (prpf38a), found in Xenopus laevis (African clawed frog).